A 336-amino-acid polypeptide reads, in one-letter code: DNA-directed RNA polymerase subunit alpha (336 aa).

The interval 1-232 (MIQKNWQELI…DQLGVFVNFD (232 aa)) is alpha N-terminal domain (alpha-NTD). Residues 248–336 (FNPALLKKVD…DLAKRYEDQY (89 aa)) are alpha C-terminal domain (alpha-CTD).

The protein belongs to the RNA polymerase alpha chain family. As to quaternary structure, homodimer. The RNAP catalytic core consists of 2 alpha, 1 beta, 1 beta' and 1 omega subunit. When a sigma factor is associated with the core the holoenzyme is formed, which can initiate transcription.

It carries out the reaction RNA(n) + a ribonucleoside 5'-triphosphate = RNA(n+1) + diphosphate. In terms of biological role, DNA-dependent RNA polymerase catalyzes the transcription of DNA into RNA using the four ribonucleoside triphosphates as substrates. In Rhizobium rhizogenes (strain K84 / ATCC BAA-868) (Agrobacterium radiobacter), this protein is DNA-directed RNA polymerase subunit alpha.